We begin with the raw amino-acid sequence, 223 residues long: uncharacterized protein (223 aa).

Residues 33 to 67 form a C4-type zinc finger; it reads CPICGGKGTLKAIQFIHRIPYFGEVMESTVVCERC.

This sequence belongs to the ZPR1 family.

This is an uncharacterized protein from Pyrococcus horikoshii (strain ATCC 700860 / DSM 12428 / JCM 9974 / NBRC 100139 / OT-3).